Consider the following 877-residue polypeptide: DNA repair protein rad16 (877 aa).

A Phosphoserine; by CK2 modification is found at S71. The interval 440–490 is disordered; that stretch reads SKSIKKPEPSKEREASNTTSRKGVPPSKRRRVRGGNNATSRTTSDNTDAND. The segment covering 444–454 has biased composition (basic and acidic residues); that stretch reads KKPEPSKEREA. Residues 475-490 show a composition bias toward polar residues; it reads NNATSRTTSDNTDAND. The ERCC4 domain maps to 652–732; it reads RVIVDLREFR…IPVLLIEFEQ (81 aa).

Belongs to the XPF family. In terms of assembly, heterodimer composed of rad16 and swi10.

The protein resides in the nucleus. It is found in the cytoplasm. It localises to the cytoskeleton. Its subcellular location is the microtubule organizing center. The protein localises to the spindle pole body. In terms of biological role, endonuclease that specifically degrades single-stranded DNA and which is involved in nucleotide excision repair of DNA damaged with UV light, bulky adducts, or cross-linking agents. Required for double strand break-induced interchromosomal gene conversion. In Schizosaccharomyces pombe (strain 972 / ATCC 24843) (Fission yeast), this protein is DNA repair protein rad16 (rad16).